A 614-amino-acid chain; its full sequence is Putative amino acid transporter AAT1 (614 aa).

The next 11 membrane-spanning stretches (helical) occupy residues 184–216 (VLFLCTAIGVGLLSIPYVFSELGIILSIILILL), 222–243 (YITTNILCMSSLEHNIFVYGNL), 255–275 (LIDFGLTFSFLSGYVLVLILV), 295–311 (RIFITIVICLLVLPLTF), 318–340 (INCFLVFSLFSITLTVLAVGYQS), 360–380 (HFFKCFNILLFSFSQQSNACF), 401–417 (ILIQVIFYTLFGLLGYL), 437–459 (SILLCKFFLCISFFFSIPLNFIA), 531–547 (CAAIFVTCLCAFVEFNV), 553–575 (FIGIFGGFTSSIISCILPNLIYY), and 587–613 (RYATLALLCFFSVIGLISSIVTAFIII).

The protein belongs to the amino acid/polyamine transporter 2 family.

The protein localises to the vacuole membrane. Functionally, putative amino acid transporter. Involved in maintaining the osmotic homeostasis of the digestive vacuole. Important for the timely development and growth of the asexual-stage parasites and male gametocyte maturation. This Plasmodium berghei (strain Anka) protein is Putative amino acid transporter AAT1.